Consider the following 115-residue polypeptide: Phosphoribosyl-AMP cyclohydrolase (115 aa).

Asp80 contacts Mg(2+). Residue Cys81 participates in Zn(2+) binding. Asp82 and Asp84 together coordinate Mg(2+). Zn(2+) contacts are provided by Cys97 and Cys104.

The protein belongs to the PRA-CH family. As to quaternary structure, homodimer. Requires Mg(2+) as cofactor. Zn(2+) serves as cofactor.

It localises to the cytoplasm. It catalyses the reaction 1-(5-phospho-beta-D-ribosyl)-5'-AMP + H2O = 1-(5-phospho-beta-D-ribosyl)-5-[(5-phospho-beta-D-ribosylamino)methylideneamino]imidazole-4-carboxamide. The protein operates within amino-acid biosynthesis; L-histidine biosynthesis; L-histidine from 5-phospho-alpha-D-ribose 1-diphosphate: step 3/9. Functionally, catalyzes the hydrolysis of the adenine ring of phosphoribosyl-AMP. This is Phosphoribosyl-AMP cyclohydrolase from Mycolicibacterium gilvum (strain PYR-GCK) (Mycobacterium gilvum (strain PYR-GCK)).